Here is a 143-residue protein sequence, read N- to C-terminus: Large ribosomal subunit protein uL11 (143 aa).

The protein belongs to the universal ribosomal protein uL11 family. As to quaternary structure, part of the ribosomal stalk of the 50S ribosomal subunit. Interacts with L10 and the large rRNA to form the base of the stalk. L10 forms an elongated spine to which L12 dimers bind in a sequential fashion forming a multimeric L10(L12)X complex. In terms of processing, one or more lysine residues are methylated.

In terms of biological role, forms part of the ribosomal stalk which helps the ribosome interact with GTP-bound translation factors. This Clavibacter sepedonicus (Clavibacter michiganensis subsp. sepedonicus) protein is Large ribosomal subunit protein uL11.